Reading from the N-terminus, the 497-residue chain is Glutamyl-tRNA(Gln) amidotransferase subunit A (497 aa).

Catalysis depends on charge relay system residues lysine 75 and serine 150. Catalysis depends on serine 174, which acts as the Acyl-ester intermediate.

This sequence belongs to the amidase family. GatA subfamily. As to quaternary structure, heterotrimer of A, B and C subunits.

The enzyme catalyses L-glutamyl-tRNA(Gln) + L-glutamine + ATP + H2O = L-glutaminyl-tRNA(Gln) + L-glutamate + ADP + phosphate + H(+). Allows the formation of correctly charged Gln-tRNA(Gln) through the transamidation of misacylated Glu-tRNA(Gln) in organisms which lack glutaminyl-tRNA synthetase. The reaction takes place in the presence of glutamine and ATP through an activated gamma-phospho-Glu-tRNA(Gln). This Paraburkholderia phymatum (strain DSM 17167 / CIP 108236 / LMG 21445 / STM815) (Burkholderia phymatum) protein is Glutamyl-tRNA(Gln) amidotransferase subunit A.